The chain runs to 211 residues: RNA chaperone ProQ (211 aa).

A disordered region spans residues 113–147 (RRAVEKANNPKANKKRSVYHSGNKSENKKSAGKKF).

This sequence belongs to the ProQ family.

It is found in the cytoplasm. Its function is as follows. RNA chaperone with significant RNA binding, RNA strand exchange and RNA duplexing activities. This is RNA chaperone ProQ from Histophilus somni (strain 129Pt) (Haemophilus somnus).